An 82-amino-acid chain; its full sequence is Putative antimicrobial peptide 7848 (82 aa).

Residues 1 to 17 (MNENLWAAPAPKKLSKH) form the signal peptide. Residues 16 to 60 (KHFFGRGGPLGKETGPNLFPKKPGAGKGLGFPPTKKPRGQPRVLK) form a disordered region. A propeptide spanning residues 38–82 (PGAGKGLGFPPTKKPRGQPRVLKKPKWNSEGLIGILHRGSDGVQF) is cleaved from the precursor. The span at 50-60 (KKPRGQPRVLK) shows a compositional bias: basic residues.

The protein belongs to the non-disulfide-bridged peptide (NDBP) superfamily. Short antimicrobial peptide (group 4) family. As to expression, expressed by the venom gland.

It is found in the secreted. The polypeptide is Putative antimicrobial peptide 7848 (Urodacus yaschenkoi (Inland robust scorpion)).